We begin with the raw amino-acid sequence, 100 residues long: NADH-quinone oxidoreductase subunit K (100 aa).

3 consecutive transmembrane segments (helical) span residues 4 to 24, 28 to 48, and 60 to 80; these read LSHG…SLVM, ILFM…ALVV, and IMYI…LALL.

This sequence belongs to the complex I subunit 4L family. In terms of assembly, NDH-1 is composed of 13 different subunits. Subunits NuoA, H, J, K, L, M, N constitute the membrane sector of the complex.

The protein resides in the cell membrane. It carries out the reaction a quinone + NADH + 5 H(+)(in) = a quinol + NAD(+) + 4 H(+)(out). Its function is as follows. NDH-1 shuttles electrons from NADH, via FMN and iron-sulfur (Fe-S) centers, to quinones in the respiratory chain. The immediate electron acceptor for the enzyme in this species is believed to be ubiquinone. Couples the redox reaction to proton translocation (for every two electrons transferred, four hydrogen ions are translocated across the cytoplasmic membrane), and thus conserves the redox energy in a proton gradient. The polypeptide is NADH-quinone oxidoreductase subunit K (Buchnera aphidicola subsp. Baizongia pistaciae (strain Bp)).